A 235-amino-acid polypeptide reads, in one-letter code: UPF0502 protein Bmul_3231/BMULJ_05293 (235 aa).

It belongs to the UPF0502 family.

The chain is UPF0502 protein Bmul_3231/BMULJ_05293 from Burkholderia multivorans (strain ATCC 17616 / 249).